A 96-amino-acid chain; its full sequence is Small ribosomal subunit protein bS16 (96 aa).

It belongs to the bacterial ribosomal protein bS16 family.

The protein is Small ribosomal subunit protein bS16 of Anaplasma phagocytophilum (strain HZ).